Consider the following 163-residue polypeptide: Endoribonuclease YbeY (163 aa).

Residues His121, His125, and His131 each coordinate Zn(2+).

It belongs to the endoribonuclease YbeY family. It depends on Zn(2+) as a cofactor.

It is found in the cytoplasm. Functionally, single strand-specific metallo-endoribonuclease involved in late-stage 70S ribosome quality control and in maturation of the 3' terminus of the 16S rRNA. This is Endoribonuclease YbeY from Synechococcus sp. (strain JA-2-3B'a(2-13)) (Cyanobacteria bacterium Yellowstone B-Prime).